The following is a 257-amino-acid chain: GTP cyclohydrolase FolE2 (257 aa).

The protein belongs to the GTP cyclohydrolase IV family.

The enzyme catalyses GTP + H2O = 7,8-dihydroneopterin 3'-triphosphate + formate + H(+). Its pathway is cofactor biosynthesis; 7,8-dihydroneopterin triphosphate biosynthesis; 7,8-dihydroneopterin triphosphate from GTP: step 1/1. Converts GTP to 7,8-dihydroneopterin triphosphate. The polypeptide is GTP cyclohydrolase FolE2 (Dictyoglomus thermophilum (strain ATCC 35947 / DSM 3960 / H-6-12)).